Consider the following 363-residue polypeptide: 3-isopropylmalate dehydrogenase (363 aa).

79-92 (GPKWEHLPPNEQPE) lines the NAD(+) pocket. Substrate contacts are provided by R100, R110, R139, and D228. Mg(2+) is bound by residues D228, D252, and D256. 286–298 (GSAPDIAGKNIAN) is a binding site for NAD(+).

This sequence belongs to the isocitrate and isopropylmalate dehydrogenases family. LeuB type 1 subfamily. Homodimer. The cofactor is Mg(2+). Mn(2+) is required as a cofactor.

The protein resides in the cytoplasm. The catalysed reaction is (2R,3S)-3-isopropylmalate + NAD(+) = 4-methyl-2-oxopentanoate + CO2 + NADH. Its pathway is amino-acid biosynthesis; L-leucine biosynthesis; L-leucine from 3-methyl-2-oxobutanoate: step 3/4. Its function is as follows. Catalyzes the oxidation of 3-carboxy-2-hydroxy-4-methylpentanoate (3-isopropylmalate) to 3-carboxy-4-methyl-2-oxopentanoate. The product decarboxylates to 4-methyl-2 oxopentanoate. This Vibrio cholerae serotype O1 (strain ATCC 39315 / El Tor Inaba N16961) protein is 3-isopropylmalate dehydrogenase.